The following is a 242-amino-acid chain: MLKLIKDSLGKFNLTLTDKQIEDIAFFLEEIYHSNQLFNLTGYKTKELIAEMLGVKTILLAQSLSYIFSNQSLNVIDIGTGAGIPGLIIKIIYPQLNVYLVDSNAKKITFINEVIKKLNFTGVFAILSRVEDNFFLKKYHGYFDYVFSQAVSKIAVLNELGTQLLKINGQIIHFKSRDYQEEIEFAKKHLSDLGLAFNNLYHYQFNSYFLVNVFYNKKAIAPQKYPREWSKIKRELIDDAKH.

Residues Gly-79, 130–131 (VE), and Gln-149 each bind S-adenosyl-L-methionine.

This sequence belongs to the methyltransferase superfamily. RNA methyltransferase RsmG family.

It is found in the cytoplasm. In terms of biological role, specifically methylates the N7 position of a guanine in 16S rRNA. The chain is Ribosomal RNA small subunit methyltransferase G from Mycoplasmoides gallisepticum (strain R(low / passage 15 / clone 2)) (Mycoplasma gallisepticum).